Consider the following 51-residue polypeptide: Large ribosomal subunit protein bL33 (51 aa).

It belongs to the bacterial ribosomal protein bL33 family.

This is Large ribosomal subunit protein bL33 from Pseudomonas putida (strain ATCC 47054 / DSM 6125 / CFBP 8728 / NCIMB 11950 / KT2440).